A 176-amino-acid polypeptide reads, in one-letter code: DNA repair RAD52-like protein 1, mitochondrial (176 aa).

Residues Met1 to Phe37 constitute a mitochondrion transit peptide.

This sequence belongs to the RAD52 family. Interacts with WHY2. As to expression, expressed in root vascular tissue, tips of primary and secondary roots, young leaves, hydathodes, stomatal guard cells, cauline leaves, flower buds, stipules, carpels, pistils and anther filaments.

The protein localises to the mitochondrion. The protein resides in the nucleus. Plant-specific single-stranded DNA-binding protein required for efficient heterologous recombination-dependent DNA repair in nuclear and mitochondrial compartments. Forms large nucleo-protein complexes with WHY2 in mitochondria. Binds ssDNA with high affinity, but with little sequence specificity. Involved in double-stranded DNA break repair. Involved in the hydrolytic splicing pathway in mitochondrion. Facilitates the excision of two cis-spliced group II introns, NAD1 intron 2 and NAD2 intron 1. The polypeptide is DNA repair RAD52-like protein 1, mitochondrial (Arabidopsis thaliana (Mouse-ear cress)).